We begin with the raw amino-acid sequence, 175 residues long: ATP-dependent protease subunit HslV (175 aa).

Thr-5 is a catalytic residue. The Na(+) site is built by Gly-160, Asp-163, and Thr-166.

This sequence belongs to the peptidase T1B family. HslV subfamily. In terms of assembly, a double ring-shaped homohexamer of HslV is capped on each side by a ring-shaped HslU homohexamer. The assembly of the HslU/HslV complex is dependent on binding of ATP.

It is found in the cytoplasm. The catalysed reaction is ATP-dependent cleavage of peptide bonds with broad specificity.. Its activity is regulated as follows. Allosterically activated by HslU binding. Its function is as follows. Protease subunit of a proteasome-like degradation complex believed to be a general protein degrading machinery. This Myxococcus xanthus protein is ATP-dependent protease subunit HslV.